We begin with the raw amino-acid sequence, 87 residues long: NADH dehydrogenase [ubiquinone] 1 alpha subcomplex subunit 4-like 2 (87 aa).

It belongs to the complex I NDUFA4 subunit family.

The sequence is that of NADH dehydrogenase [ubiquinone] 1 alpha subcomplex subunit 4-like 2 (Ndufa4l2) from Mus musculus (Mouse).